We begin with the raw amino-acid sequence, 299 residues long: UDP-N-acetylenolpyruvoylglucosamine reductase (299 aa).

Residues 26–191 (GIGGPAKYFV…VSATFQLNAS (166 aa)) enclose the FAD-binding PCMH-type domain. Residue Arg-170 is part of the active site. Cys-218 acts as the Proton donor in catalysis. Residue Glu-288 is part of the active site.

The protein belongs to the MurB family. FAD is required as a cofactor.

The protein localises to the cytoplasm. It catalyses the reaction UDP-N-acetyl-alpha-D-muramate + NADP(+) = UDP-N-acetyl-3-O-(1-carboxyvinyl)-alpha-D-glucosamine + NADPH + H(+). It functions in the pathway cell wall biogenesis; peptidoglycan biosynthesis. Functionally, cell wall formation. This Protochlamydia amoebophila (strain UWE25) protein is UDP-N-acetylenolpyruvoylglucosamine reductase.